Reading from the N-terminus, the 331-residue chain is METHSELWSLEAIKEVYNTPIFELIHRANAILRSNFPHSELQTCYLVSIKTGGCTEDCAYCAQSSRYQTHVKPEPMMKITEVLDRAKQAIRAGATRVCLGAAWREVKDNHQFDRTLEMIKGITDMGAEVCCTLGMLTPSQAEKLFEAGLYAYNHNLDSSEGFYKTIITTRKYEDRLRTLDIVEKSGLHVCCGGIIGMGETVEDRVELLHNLARRERMPESVPVNVLWPIKGTPLYDQASISFWEILRTIATARIVFPQSMVRLAAGRAFLSVEQQTLCFIAGANSIFYGEKLLTVDNNDMDADTAMLNLLGMRHRPSFSMERGQPCQSVTC.

Positions 39–264 (SELQTCYLVS…VFPQSMVRLA (226 aa)) constitute a Radical SAM core domain. Cysteine 54, cysteine 58, and cysteine 61 together coordinate [4Fe-4S] cluster. Positions 98, 130, 190, and 262 each coordinate [2Fe-2S] cluster.

This sequence belongs to the radical SAM superfamily. Biotin synthase family. In terms of assembly, homodimer. The cofactor is [4Fe-4S] cluster. [2Fe-2S] cluster serves as cofactor.

It carries out the reaction (4R,5S)-dethiobiotin + (sulfur carrier)-SH + 2 reduced [2Fe-2S]-[ferredoxin] + 2 S-adenosyl-L-methionine = (sulfur carrier)-H + biotin + 2 5'-deoxyadenosine + 2 L-methionine + 2 oxidized [2Fe-2S]-[ferredoxin]. It participates in cofactor biosynthesis; biotin biosynthesis; biotin from 7,8-diaminononanoate: step 2/2. In terms of biological role, catalyzes the conversion of dethiobiotin (DTB) to biotin by the insertion of a sulfur atom into dethiobiotin via a radical-based mechanism. The protein is Biotin synthase of Chlamydia abortus (strain DSM 27085 / S26/3) (Chlamydophila abortus).